The primary structure comprises 218 residues: 3,4-dihydroxy-2-butanone 4-phosphate synthase (218 aa).

D-ribulose 5-phosphate is bound by residues 38-39, aspartate 43, 151-155, and glutamate 175; these read RE and RRGHT. Glutamate 39 contacts Mg(2+). The segment at 125-151 is disordered; the sequence is PHAKPEDLARPGHVFPLRARPGGVMTR. Histidine 154 lines the Mg(2+) pocket.

It belongs to the DHBP synthase family. As to quaternary structure, homodimer. Requires Mg(2+) as cofactor. Mn(2+) is required as a cofactor.

The enzyme catalyses D-ribulose 5-phosphate = (2S)-2-hydroxy-3-oxobutyl phosphate + formate + H(+). It functions in the pathway cofactor biosynthesis; riboflavin biosynthesis; 2-hydroxy-3-oxobutyl phosphate from D-ribulose 5-phosphate: step 1/1. Its function is as follows. Catalyzes the conversion of D-ribulose 5-phosphate to formate and 3,4-dihydroxy-2-butanone 4-phosphate. In Vibrio parahaemolyticus serotype O3:K6 (strain RIMD 2210633), this protein is 3,4-dihydroxy-2-butanone 4-phosphate synthase.